Reading from the N-terminus, the 396-residue chain is Subtilisin-like protease 5 (396 aa).

An N-terminal signal peptide occupies residues Met1 to Ala20. The propeptide occupies Ala21 to His116. The 77-residue stretch at Tyr37–Ile113 folds into the Inhibitor I9 domain. Asn63 carries N-linked (GlcNAc...) asparagine glycosylation. The Peptidase S8 domain occupies Pro125–Arg396. Active-site charge relay system residues include Asp156 and His187. N-linked (GlcNAc...) asparagine glycosylation is found at Asn230 and Asn248. The active-site Charge relay system is Ser342. Residues Pro376 to Leu389 show a composition bias toward polar residues. The segment at Pro376–Arg396 is disordered. N-linked (GlcNAc...) asparagine glycosylation occurs at Asn392.

This sequence belongs to the peptidase S8 family.

The protein localises to the secreted. Its function is as follows. Secreted subtilisin-like serine protease with keratinolytic activity that contributes to pathogenicity. This chain is Subtilisin-like protease 5 (SUB5), found in Trichophyton verrucosum (Cattle ringworm fungus).